Reading from the N-terminus, the 87-residue chain is Small ribosomal subunit protein bS18 (87 aa).

Basic and acidic residues predominate over residues 1-10; the sequence is MAGKSSGDRR. The disordered stretch occupies residues 1 to 23; it reads MAGKSSGDRRKPLRGAKGGKNAA.

It belongs to the bacterial ribosomal protein bS18 family. As to quaternary structure, part of the 30S ribosomal subunit. Forms a tight heterodimer with protein bS6.

Its function is as follows. Binds as a heterodimer with protein bS6 to the central domain of the 16S rRNA, where it helps stabilize the platform of the 30S subunit. The polypeptide is Small ribosomal subunit protein bS18 (Clavibacter michiganensis subsp. michiganensis (strain NCPPB 382)).